Consider the following 512-residue polypeptide: Cytochrome P450 82C3 (512 aa).

The helical transmembrane segment at 1–21 (MDTSLFSLFVSILVFVFIALF) threads the bilayer. Cys-451 lines the heme pocket.

The protein belongs to the cytochrome P450 family. It depends on heme as a cofactor.

It localises to the membrane. In Arabidopsis thaliana (Mouse-ear cress), this protein is Cytochrome P450 82C3 (CYP82C3).